The chain runs to 320 residues: Annexin A5 (320 aa).

Ala-2 carries the post-translational modification N-acetylalanine. Annexin repeat units lie at residues 15-86, 87-158, 170-242, and 246-317; these read FDER…ALMK, PSRL…VLLQ, AQVE…AVVK, and SIPA…LLCG. A Glycyl lysine isopeptide (Lys-Gly) (interchain with G-Cter in SUMO1); alternate cross-link involves residue Lys-29. Lys-29 is covalently cross-linked (Glycyl lysine isopeptide (Lys-Gly) (interchain with G-Cter in SUMO2); alternate). Ser-37 bears the Phosphoserine mark. Residues Lys-70, Lys-76, Lys-79, Lys-97, and Lys-101 each carry the N6-acetyllysine modification. Lys-290 carries the N6-succinyllysine modification. The [IL]-x-C-x-x-[DE] motif signature appears at 314-320; it reads LLCGGED.

The protein belongs to the annexin family. As to quaternary structure, monomer. Binds ATRX and EIF5B. In terms of processing, S-nitrosylation is induced by interferon-gamma and oxidatively-modified low-densitity lipoprotein (LDL(ox)) possibly implicating the iNOS-S100A8/9 transnitrosylase complex.

Functionally, this protein is an anticoagulant protein that acts as an indirect inhibitor of the thromboplastin-specific complex, which is involved in the blood coagulation cascade. This Macaca fascicularis (Crab-eating macaque) protein is Annexin A5 (ANXA5).